The primary structure comprises 276 residues: Exosome complex component RRP43 (276 aa).

Ala2 is modified (N-acetylalanine).

It belongs to the RNase PH family. Component of the RNA exosome core complex (Exo-9), composed of EXOSC1, EXOSC2, EXOSC3, EXOSC4, EXOSC5, EXOSC6, EXOSC7, EXOSC8 and EXOSC9; within the complex interacts with EXOSC5 and EXOSC6. The catalytically inactive RNA exosome core complex (Exo-9) associates with the catalytic subunit EXOSC10/RRP6. Exo-9 may associate with DIS3 to form the nucleolar exosome complex, or DIS3L to form the cytoplasmic exosome complex. Exo-9 is formed by a hexameric base ring consisting of the heterodimers EXOSC4-EXOSC9, EXOSC5-EXOSC8 and EXOSC6-EXOSC7, and a cap ring consisting of EXOSC1, EXOSC2 and EXOSC3. The RNA exosome complex associates with cofactors C1D/RRP47, MPHOSPH6/MPP6 and MTREX/MTR4. Binds outer membrane protein opap from Neisseria gonorrhoeae.

The protein resides in the cytoplasm. It localises to the nucleus. It is found in the nucleolus. Functionally, non-catalytic component of the RNA exosome complex which has 3'-&gt;5' exoribonuclease activity and participates in a multitude of cellular RNA processing and degradation events. In the nucleus, the RNA exosome complex is involved in proper maturation of stable RNA species such as rRNA, snRNA and snoRNA, in the elimination of RNA processing by-products and non-coding 'pervasive' transcripts, such as antisense RNA species and promoter-upstream transcripts (PROMPTs), and of mRNAs with processing defects, thereby limiting or excluding their export to the cytoplasm. The RNA exosome may be involved in Ig class switch recombination (CSR) and/or Ig variable region somatic hypermutation (SHM) by targeting AICDA deamination activity to transcribed dsDNA substrates. In the cytoplasm, the RNA exosome complex is involved in general mRNA turnover and specifically degrades inherently unstable mRNAs containing AU-rich elements (AREs) within their 3' untranslated regions, and in RNA surveillance pathways, preventing translation of aberrant mRNAs. It seems to be involved in degradation of histone mRNA. The catalytic inactive RNA exosome core complex of 9 subunits (Exo-9) is proposed to play a pivotal role in the binding and presentation of RNA for ribonucleolysis, and to serve as a scaffold for the association with catalytic subunits and accessory proteins or complexes. EXOSC8 binds to ARE-containing RNAs. The sequence is that of Exosome complex component RRP43 (EXOSC8) from Homo sapiens (Human).